The following is a 350-amino-acid chain: MTQSLVISIDAMGGDHGPSVVVPAAARAARDLPHVRFLLHGDEAAVRAEVARCAGLAERTEVRHADRVIGMDEKPAQALRRGKGTSMWGAVEAIREGDAHVAVSAGNTGALMAISKLILRMSADLDRPALVASIPHAKGVTTFLDVGANVDCDAERLVEFAIMGEAYHRAAHGVAKPTVGLLNVGSEEMKGHEEVREANRILREGGFDLEYRGFVEGDDLTKGSVDVVVTDGFTGNVALKAMEGAARFMYGELRAALTAGPFSSLGALLARPSLLRFRERMSPPPAAPLLGLNGLVLKCHGGAGDREFAKAIRAAADVAQSGFASEIERNMRRLPAALSPAAPSPADGAA.

This sequence belongs to the PlsX family. Homodimer. Probably interacts with PlsY.

It is found in the cytoplasm. It catalyses the reaction a fatty acyl-[ACP] + phosphate = an acyl phosphate + holo-[ACP]. Its pathway is lipid metabolism; phospholipid metabolism. In terms of biological role, catalyzes the reversible formation of acyl-phosphate (acyl-PO(4)) from acyl-[acyl-carrier-protein] (acyl-ACP). This enzyme utilizes acyl-ACP as fatty acyl donor, but not acyl-CoA. This Phenylobacterium zucineum (strain HLK1) protein is Phosphate acyltransferase.